Here is a 225-residue protein sequence, read N- to C-terminus: Peptidyl-tRNA hydrolase (225 aa).

Tyrosine 14 contacts tRNA. Histidine 19 functions as the Proton acceptor in the catalytic mechanism. TRNA is bound by residues phenylalanine 64, asparagine 66, and asparagine 112. The tract at residues 182–225 is disordered; sequence AVALRMQPPKPEKPKPAAKAPEAQAPEAAPDERSALQKLADRFR. Over residues 198-209 the composition is skewed to low complexity; that stretch reads AAKAPEAQAPEA. The segment covering 211 to 225 has biased composition (basic and acidic residues); it reads PDERSALQKLADRFR.

Belongs to the PTH family. As to quaternary structure, monomer.

It localises to the cytoplasm. The enzyme catalyses an N-acyl-L-alpha-aminoacyl-tRNA + H2O = an N-acyl-L-amino acid + a tRNA + H(+). Its function is as follows. Hydrolyzes ribosome-free peptidyl-tRNAs (with 1 or more amino acids incorporated), which drop off the ribosome during protein synthesis, or as a result of ribosome stalling. Functionally, catalyzes the release of premature peptidyl moieties from peptidyl-tRNA molecules trapped in stalled 50S ribosomal subunits, and thus maintains levels of free tRNAs and 50S ribosomes. This chain is Peptidyl-tRNA hydrolase, found in Cereibacter sphaeroides (strain ATCC 17029 / ATH 2.4.9) (Rhodobacter sphaeroides).